The following is a 2156-amino-acid chain: MAM and LDL-receptor class A domain-containing protein 1 (2156 aa).

A signal peptide spans 1–31; sequence MLFFLDRMLAFPMNETFCCLWIACVFNSTLA. At 32 to 2076 the chain is on the vesicular side; sequence QQGTESFQCD…FTYAQNNTWT (2045 aa). The 36-residue stretch at 33 to 68 folds into the LDL-receptor class A 1 domain; sequence QGTESFQCDNGVSLPPDSICDFTDQCGDSSDERHCL. Intrachain disulfides connect C40–C58 and C52–C67. 2 MAM domains span residues 71–229 and 268–427; these read ERCD…GCLP and QACG…ACGQ. The region spanning 433 to 471 is the LDL-receptor class A 2 domain; that stretch reads LCSADEFPCTSGQCIAKESVCDSRQDCSDESDEDPATCS. Cystine bridges form between C434–C446, C441–C459, and C453–C470. MAM domains lie at 474–637 and 652–816; these read LTCD…ECEI and SKCD…NCTL. The N-linked (GlcNAc...) asparagine glycan is linked to N813. The region spanning 822–860 is the LDL-receptor class A 3 domain; sequence SCEGLDHFWCRHTRACIEKLRLCDLVDDCGDRTDEVNCA. 3 disulfides stabilise this stretch: C823–C837, C831–C850, and C844–C859. The region spanning 863–1024 is the MAM 5 domain; sequence LQCNFETGIC…DDLSFMDCTL (162 aa). A glycan (N-linked (GlcNAc...) asparagine) is linked at N1049. The region spanning 1049 to 1086 is the LDL-receptor class A 4 domain; the sequence is NCTDNEFICRSDGHCIEKMQKCDFKYDCPDKSDEASCV. Cystine bridges form between C1050/C1063, C1057/C1076, and C1070/C1085. The region spanning 1088–1256 is the MAM 6 domain; sequence EVCSFEKRSL…DDISFQDCSP (169 aa). N1199 carries N-linked (GlcNAc...) asparagine glycosylation. The LDL-receptor class A 5 domain occupies 1263–1301; that stretch reads KCTDHEFMCANKHCIAKDKLCDFVNDCADNSDETTFICR. 3 disulfide bridges follow: C1264/C1276, C1271/C1289, and C1283/C1300. The MAM 7 domain maps to 1305–1465; sequence GRCDFEFDLC…DIVLTENCLS (161 aa). A glycan (N-linked (GlcNAc...) asparagine) is linked at N1414. The LDL-receptor class A 6 domain occupies 1482–1518; that stretch reads FCPLGYRECHNGKCYRLEQSCNFVDNCGDNTDENECG. 3 disulfide bridges follow: C1483/C1495, C1490/C1508, and C1502/C1517. One can recognise an MAM 8 domain in the interval 1519-1676; sequence SSCTFEKGWC…DDIEFKNCTT (158 aa). An LDL-receptor class A 7 domain is found at 1683 to 1720; the sequence is LCPEITDFLCRDKKCIASHLLCDYKPDCSDRSDEAHCA. Cystine bridges form between C1684–C1697, C1692–C1710, and C1704–C1719. The MAM 9 domain maps to 1727–1892; the sequence is GSCNFETSSG…DISFTPECVT (166 aa). LDL-receptor class A domains lie at 1902–1939, 1946–1982, and 1985–2023; these read PCEADQFSCIYTLQCVPLSGKCDGHEDCIDGSDEMDCP, LCSNMEFPCSTDECIPSLLLCDGVPDCHFNEDELICS, and SCSNGALVCASSNSCIPAHQRCDGFADCMDFQLDESSCS. Disulfide bonds link C1903-C1916, C1910-C1929, C1923-C1938, C1947-C1959, C1954-C1972, C1966-C1981, C1986-C1999, C1993-C2012, C2006-C2022, C2025-C2036, C2030-C2045, and C2047-C2056. One can recognise an EGF-like domain in the interval 2024-2057; it reads ECPLNYCRNGGTCVVEKNGPMCRCRQGWKGNRCH. A helical membrane pass occupies residues 2077–2097; it reads LLGIGLAFLMTHITVAVLCFL. The Cytoplasmic portion of the chain corresponds to 2098–2156; the sequence is ANRKVPIRKTEGSGNCAFVNPVYGNWSNPEKTESSVYSFSNPLYGTTSGSLETLSHHLK.

In terms of assembly, interacts with FGF19. As to expression, strongly expressed in the small intestine.

The protein resides in the cytoplasmic vesicle membrane. Its function is as follows. Enhances production and/or transport of FGF19 and thus has a role in regulation of bile acid synthesis. The polypeptide is MAM and LDL-receptor class A domain-containing protein 1 (Homo sapiens (Human)).